The sequence spans 508 residues: ATP synthase subunit alpha, chloroplastic (508 aa).

172 to 179 serves as a coordination point for ATP; sequence GDRQTGKT.

It belongs to the ATPase alpha/beta chains family. In terms of assembly, F-type ATPases have 2 components, CF(1) - the catalytic core - and CF(0) - the membrane proton channel. CF(1) has five subunits: alpha(3), beta(3), gamma(1), delta(1), epsilon(1). CF(0) has four main subunits: a, b, b' and c.

Its subcellular location is the plastid. It is found in the chloroplast thylakoid membrane. It catalyses the reaction ATP + H2O + 4 H(+)(in) = ADP + phosphate + 5 H(+)(out). Its function is as follows. Produces ATP from ADP in the presence of a proton gradient across the membrane. The alpha chain is a regulatory subunit. This chain is ATP synthase subunit alpha, chloroplastic, found in Angiopteris evecta (Mule's foot fern).